The primary structure comprises 164 residues: CDP-archaeol synthase (164 aa).

Transmembrane regions (helical) follow at residues 3–23 (LFVF…AVLA), 53–73 (GLAI…LLHP), 77–97 (LLDA…GAFI), and 126–146 (SLYA…TPII).

It belongs to the CDP-archaeol synthase family. It depends on Mg(2+) as a cofactor.

Its subcellular location is the cell membrane. The enzyme catalyses 2,3-bis-O-(geranylgeranyl)-sn-glycerol 1-phosphate + CTP + H(+) = CDP-2,3-bis-O-(geranylgeranyl)-sn-glycerol + diphosphate. It functions in the pathway membrane lipid metabolism; glycerophospholipid metabolism. Its function is as follows. Catalyzes the formation of CDP-2,3-bis-(O-geranylgeranyl)-sn-glycerol (CDP-archaeol) from 2,3-bis-(O-geranylgeranyl)-sn-glycerol 1-phosphate (DGGGP) and CTP. This reaction is the third ether-bond-formation step in the biosynthesis of archaeal membrane lipids. The chain is CDP-archaeol synthase from Pyrobaculum arsenaticum (strain DSM 13514 / JCM 11321 / PZ6).